The sequence spans 179 residues: Inosine/xanthosine triphosphatase (179 aa).

E71 lines the Mg(2+) pocket. 71 to 72 (EA) serves as a coordination point for substrate.

The protein belongs to the YjjX NTPase family. As to quaternary structure, homodimer. Mg(2+) is required as a cofactor. Requires Mn(2+) as cofactor.

The catalysed reaction is XTP + H2O = XDP + phosphate + H(+). It carries out the reaction ITP + H2O = IDP + phosphate + H(+). Its function is as follows. Phosphatase that hydrolyzes non-canonical purine nucleotides such as XTP and ITP to their respective diphosphate derivatives. Probably excludes non-canonical purines from DNA/RNA precursor pool, thus preventing their incorporation into DNA/RNA and avoiding chromosomal lesions. The sequence is that of Inosine/xanthosine triphosphatase from Shewanella sp. (strain MR-7).